The primary structure comprises 432 residues: Adenylosuccinate synthetase (432 aa).

GTP is bound by residues G12–K18 and G40–T42. Catalysis depends on D13, which acts as the Proton acceptor. Residues D13 and G40 each coordinate Mg(2+). Residues D13–K16, N38–H41, T133, R147, Q228, T243, and R307 each bind IMP. The active-site Proton donor is the H41. T303 to R309 serves as a coordination point for substrate. GTP-binding positions include R309, K335–D337, and G417–G419.

Belongs to the adenylosuccinate synthetase family. Homodimer. Mg(2+) serves as cofactor.

Its subcellular location is the cytoplasm. It carries out the reaction IMP + L-aspartate + GTP = N(6)-(1,2-dicarboxyethyl)-AMP + GDP + phosphate + 2 H(+). It participates in purine metabolism; AMP biosynthesis via de novo pathway; AMP from IMP: step 1/2. Functionally, plays an important role in the de novo pathway of purine nucleotide biosynthesis. Catalyzes the first committed step in the biosynthesis of AMP from IMP. This is Adenylosuccinate synthetase from Nocardioides sp. (strain ATCC BAA-499 / JS614).